A 130-amino-acid polypeptide reads, in one-letter code: Small ribosomal subunit protein uS11 (130 aa).

It belongs to the universal ribosomal protein uS11 family. As to quaternary structure, part of the 30S ribosomal subunit. Interacts with proteins S7 and S18. Binds to IF-3.

In terms of biological role, located on the platform of the 30S subunit, it bridges several disparate RNA helices of the 16S rRNA. Forms part of the Shine-Dalgarno cleft in the 70S ribosome. The polypeptide is Small ribosomal subunit protein uS11 (Latilactobacillus sakei subsp. sakei (strain 23K) (Lactobacillus sakei subsp. sakei)).